A 209-amino-acid polypeptide reads, in one-letter code: Ribonuclease HII (209 aa).

The region spanning 19–209 (CIIVGVDEVG…LPGITKLYSK (191 aa)) is the RNase H type-2 domain. Residues Asp-25, Glu-26, and Asp-118 each contribute to the a divalent metal cation site.

This sequence belongs to the RNase HII family. Mn(2+) serves as cofactor. The cofactor is Mg(2+).

It localises to the cytoplasm. The enzyme catalyses Endonucleolytic cleavage to 5'-phosphomonoester.. Endonuclease that specifically degrades the RNA of RNA-DNA hybrids. The polypeptide is Ribonuclease HII (Ehrlichia canis (strain Jake)).